Consider the following 93-residue polypeptide: Small ribosomal subunit protein uS19 (93 aa).

The protein belongs to the universal ribosomal protein uS19 family.

Its function is as follows. Protein S19 forms a complex with S13 that binds strongly to the 16S ribosomal RNA. This Nocardia farcinica (strain IFM 10152) protein is Small ribosomal subunit protein uS19.